A 152-amino-acid chain; its full sequence is Ribosome maturation factor RimP (152 aa).

Belongs to the RimP family.

It localises to the cytoplasm. Its function is as follows. Required for maturation of 30S ribosomal subunits. This is Ribosome maturation factor RimP from Citrobacter koseri (strain ATCC BAA-895 / CDC 4225-83 / SGSC4696).